The chain runs to 173 residues: Photosystem I assembly protein Ycf3 (173 aa).

TPR repeat units follow at residues 35-68, 72-105, and 120-153; these read AYIY…EENK, GETL…NPKQ, and GRFA…YPGG.

Belongs to the Ycf3 family.

The protein resides in the cellular thylakoid membrane. Essential for the assembly of the photosystem I (PSI) complex. May act as a chaperone-like factor to guide the assembly of the PSI subunits. This chain is Photosystem I assembly protein Ycf3, found in Prochlorococcus marinus subsp. pastoris (strain CCMP1986 / NIES-2087 / MED4).